We begin with the raw amino-acid sequence, 685 residues long: Methionine--tRNA ligase (685 aa).

Positions 15-25 (PYANGPIHLGH) match the 'HIGH' region motif. Residues Cys146, Cys149, Cys159, and Cys162 each coordinate Zn(2+). The 'KMSKS' region motif lies at 331–335 (KMSKS). Position 334 (Lys334) interacts with ATP. The tRNA-binding domain occupies 583 to 685 (DFAKMDLRVA…AGVKAGSRVK (103 aa)).

Belongs to the class-I aminoacyl-tRNA synthetase family. MetG type 1 subfamily. Homodimer. The cofactor is Zn(2+).

Its subcellular location is the cytoplasm. The enzyme catalyses tRNA(Met) + L-methionine + ATP = L-methionyl-tRNA(Met) + AMP + diphosphate. Functionally, is required not only for elongation of protein synthesis but also for the initiation of all mRNA translation through initiator tRNA(fMet) aminoacylation. The protein is Methionine--tRNA ligase of Actinobacillus succinogenes (strain ATCC 55618 / DSM 22257 / CCUG 43843 / 130Z).